The chain runs to 418 residues: AP-1 complex subunit mu (418 aa).

Positions 176–417 (NNEAYFDVTE…VTKAGKFQVR (242 aa)) constitute an MHD domain.

Belongs to the adaptor complexes medium subunit family. Adaptor protein complex 1 (AP-1) is a heterotetramer composed of two large adaptins (gamma- and beta'-type subunits), a medium adaptin (mu-type subunit AP47) and a small adaptin (sigma-type subunit AP19). In terms of processing, regulated by phosphorylation.

It is found in the golgi apparatus. It localises to the cytoplasmic vesicle. The protein resides in the clathrin-coated vesicle membrane. Component of the adapter complexes which link clathrin to receptors in coated vesicles. Clathrin-associated protein complexes are believed to interact with the cytoplasmic tails of membrane proteins, leading to their selection and concentration. AP47 is a subunit of the plasma membrane adapter. The sequence is that of AP-1 complex subunit mu from Diplobatis ommata (Ocellated electric ray).